We begin with the raw amino-acid sequence, 334 residues long: Malate dehydrogenase, cytoplasmic (334 aa).

Residue glycine 11–alanine 17 participates in NAD(+) binding. Arginine 92 and arginine 98 together coordinate substrate. Residues asparagine 105, glutamine 112, and valine 129 to asparagine 131 contribute to the NAD(+) site. Residues asparagine 131 and arginine 162 each coordinate substrate. Histidine 187 (proton acceptor) is an active-site residue.

It belongs to the LDH/MDH superfamily. MDH type 2 family. In terms of assembly, homodimer.

It localises to the cytoplasm. Its subcellular location is the cytosol. It catalyses the reaction (S)-malate + NAD(+) = oxaloacetate + NADH + H(+). The enzyme catalyses (S)-2-hydroxyglutarate + NAD(+) = 2-oxoglutarate + NADH + H(+). Its function is as follows. Catalyzes the reduction of aromatic alpha-keto acids in the presence of NADH. Plays essential roles in the malate-aspartate shuttle and the tricarboxylic acid cycle, important in mitochondrial NADH supply for oxidative phosphorylation. Catalyzes the reduction of 2-oxoglutarate to 2-hydroxyglutarate, leading to elevated reactive oxygen species (ROS). The sequence is that of Malate dehydrogenase, cytoplasmic (mdh1) from Xenopus laevis (African clawed frog).